The chain runs to 729 residues: U-box domain-containing protein 17 (729 aa).

The 75-residue stretch at 304-378 folds into the U-box domain; that stretch reads TVPKDFVCPI…VQWCTASGIS (75 aa). ARM repeat units follow at residues 438–477, 479–520, 523–562, and 564–601; these read KENR…NLSI, EKNK…SLSA, EYKK…NLST, and PDNC…LLVR.

It carries out the reaction S-ubiquitinyl-[E2 ubiquitin-conjugating enzyme]-L-cysteine + [acceptor protein]-L-lysine = [E2 ubiquitin-conjugating enzyme]-L-cysteine + N(6)-ubiquitinyl-[acceptor protein]-L-lysine.. It participates in protein modification; protein ubiquitination. In terms of biological role, functions as an E3 ubiquitin ligase. This Arabidopsis thaliana (Mouse-ear cress) protein is U-box domain-containing protein 17 (PUB17).